A 180-amino-acid chain; its full sequence is Trichosurin (180 aa).

An N-terminal signal peptide occupies residues 1 to 15; it reads MKLLLLSMGLALVCG. 2 N-linked (GlcNAc...) asparagine glycosylation sites follow: asparagine 67 and asparagine 148. Cysteine 87 and cysteine 180 are disulfide-bonded.

Belongs to the calycin superfamily. Lipocalin family. In terms of assembly, homodimer. As to expression, milk.

The protein resides in the secreted. The chain is Trichosurin from Trichosurus vulpecula (Brush-tailed possum).